The primary structure comprises 86 residues: Photosystem I reaction center subunit PsaK (86 aa).

The next 2 membrane-spanning stretches (helical) occupy residues 15 to 35 (SWSI…IGLG) and 57 to 77 (GLPE…GAII).

The protein belongs to the PsaG/PsaK family.

It is found in the plastid. The protein localises to the chloroplast thylakoid membrane. The sequence is that of Photosystem I reaction center subunit PsaK from Gracilaria tenuistipitata var. liui (Red alga).